A 508-amino-acid polypeptide reads, in one-letter code: Protein S-acyltransferase 18 (508 aa).

Helical transmembrane passes span 17 to 37 (IVGAVIYSVLVAAFYVFLGFF) and 42 to 62 (IAVIALLSVFSSVAVSVIVLF). Residues 158 to 208 (SYCSLCDLEVKRSSKHCRTCNRCVEGFDHHCRWLNNCVGKKNYTTFILLMV) enclose the DHHC domain. Cys-188 serves as the catalytic S-palmitoyl cysteine intermediate. 2 helical membrane-spanning segments follow: residues 203–223 (FILLMVFVLLMLIIEGGTALA) and 250–270 (WALATISIILVLFTAYGSAAM). Residues 443-468 (VSPGRFSSPRRRFSGSSSSTVPSPKQ) are disordered. Residues 456–466 (SGSSSSTVPSP) show a composition bias toward low complexity.

The protein belongs to the DHHC palmitoyltransferase family.

The protein localises to the endoplasmic reticulum membrane. The protein resides in the cytoplasmic vesicle membrane. The catalysed reaction is L-cysteinyl-[protein] + hexadecanoyl-CoA = S-hexadecanoyl-L-cysteinyl-[protein] + CoA. In terms of biological role, S-acyltransferase involved in protein lipid modification. The sequence is that of Protein S-acyltransferase 18 (PAT18) from Arabidopsis thaliana (Mouse-ear cress).